The sequence spans 312 residues: Ribosomal RNA small subunit methyltransferase H (312 aa).

S-adenosyl-L-methionine contacts are provided by residues glycine 35 to histidine 37, aspartate 54, phenylalanine 81, aspartate 100, and glutamine 107.

The protein belongs to the methyltransferase superfamily. RsmH family.

It localises to the cytoplasm. The catalysed reaction is cytidine(1402) in 16S rRNA + S-adenosyl-L-methionine = N(4)-methylcytidine(1402) in 16S rRNA + S-adenosyl-L-homocysteine + H(+). In terms of biological role, specifically methylates the N4 position of cytidine in position 1402 (C1402) of 16S rRNA. The polypeptide is Ribosomal RNA small subunit methyltransferase H (Campylobacter jejuni subsp. jejuni serotype O:2 (strain ATCC 700819 / NCTC 11168)).